A 569-amino-acid polypeptide reads, in one-letter code: GATOR1 complex protein NPRL3 (569 aa).

Disordered regions lie at residues 27 to 60 and 441 to 476; these read PFQR…DQDG and TPNA…SGDS. Composition is skewed to polar residues over residues 34–52 and 441–468; these read HPAS…NNTG and TPNA…NSSA. At Ser476 the chain carries Phosphoserine.

Belongs to the NPR3 family. Within the GATOR complex, component of the GATOR1 subcomplex, made of DEPDC5, NPRL2 and NPRL3. GATOR1 mediates the strong interaction of the GATOR complex with small GTPases Rag (RagA/RRAGA, RagB/RRAGB, RagC/RRAGC and/or RagD/RRAGD) heterodimers. GATOR1 interacts with GPR155/LYCHOS; interaction takes place in presence of cholesterol and prevents interaction between GATOR1 and KICSTOR.

It is found in the lysosome membrane. In terms of biological role, as a component of the GATOR1 complex functions as an inhibitor of the amino acid-sensing branch of the mTORC1 pathway. In response to amino acid depletion, the GATOR1 complex has GTPase activating protein (GAP) activity and strongly increases GTP hydrolysis by RagA/RRAGA (or RagB/RRAGB) within heterodimeric Rag complexes, thereby turning them into their inactive GDP-bound form, releasing mTORC1 from lysosomal surface and inhibiting mTORC1 signaling. In the presence of abundant amino acids, the GATOR1 complex is negatively regulated by GATOR2, the other GATOR subcomplex, in this amino acid-sensing branch of the TORC1 pathway. The chain is GATOR1 complex protein NPRL3 from Mus musculus (Mouse).